The following is a 308-amino-acid chain: tRNA pseudouridine synthase B (308 aa).

Asp47 acts as the Nucleophile in catalysis.

It belongs to the pseudouridine synthase TruB family. Type 1 subfamily.

The enzyme catalyses uridine(55) in tRNA = pseudouridine(55) in tRNA. In terms of biological role, responsible for synthesis of pseudouridine from uracil-55 in the psi GC loop of transfer RNAs. This Xanthomonas axonopodis pv. citri (strain 306) protein is tRNA pseudouridine synthase B.